We begin with the raw amino-acid sequence, 141 residues long: MAKKLIGTLKLQVPAGKANPSPPVGPALGQRGINIMEFCKAFNAKTADMEVGAPCPTVISYYQDKSFTMDIKTPPASYFLKKAAKIQSGANKPSRETAGTVTVAQIREIAEAKMKDLNANDIDGAMQIILGSARSMGIEVK.

It belongs to the universal ribosomal protein uL11 family. As to quaternary structure, part of the ribosomal stalk of the 50S ribosomal subunit. Interacts with L10 and the large rRNA to form the base of the stalk. L10 forms an elongated spine to which L12 dimers bind in a sequential fashion forming a multimeric L10(L12)X complex. In terms of processing, one or more lysine residues are methylated.

Functionally, forms part of the ribosomal stalk which helps the ribosome interact with GTP-bound translation factors. The sequence is that of Large ribosomal subunit protein uL11 from Ruegeria pomeroyi (strain ATCC 700808 / DSM 15171 / DSS-3) (Silicibacter pomeroyi).